The following is a 428-amino-acid chain: Enolase (428 aa).

Glutamine 163 provides a ligand contact to (2R)-2-phosphoglycerate. Glutamate 205 (proton donor) is an active-site residue. Positions 242, 285, and 312 each coordinate Mg(2+). (2R)-2-phosphoglycerate contacts are provided by lysine 337, arginine 366, serine 367, and lysine 388. Lysine 337 functions as the Proton acceptor in the catalytic mechanism.

It belongs to the enolase family. The cofactor is Mg(2+).

It localises to the cytoplasm. The protein localises to the secreted. Its subcellular location is the cell surface. It carries out the reaction (2R)-2-phosphoglycerate = phosphoenolpyruvate + H2O. It participates in carbohydrate degradation; glycolysis; pyruvate from D-glyceraldehyde 3-phosphate: step 4/5. Its function is as follows. Catalyzes the reversible conversion of 2-phosphoglycerate (2-PG) into phosphoenolpyruvate (PEP). It is essential for the degradation of carbohydrates via glycolysis. The sequence is that of Enolase from Nitrosomonas eutropha (strain DSM 101675 / C91 / Nm57).